We begin with the raw amino-acid sequence, 335 residues long: Methionine import ATP-binding protein MetN 1 (335 aa).

Positions 2-242 (IEFQQVHKTY…PQHPTTKRFV (241 aa)) constitute an ABC transporter domain. ATP is bound at residue 38-45 (GHSGAGKS).

It belongs to the ABC transporter superfamily. Methionine importer (TC 3.A.1.24) family. As to quaternary structure, the complex is composed of two ATP-binding proteins (MetN), two transmembrane proteins (MetI) and a solute-binding protein (MetQ).

It localises to the cell inner membrane. The enzyme catalyses L-methionine(out) + ATP + H2O = L-methionine(in) + ADP + phosphate + H(+). The catalysed reaction is D-methionine(out) + ATP + H2O = D-methionine(in) + ADP + phosphate + H(+). Part of the ABC transporter complex MetNIQ involved in methionine import. Responsible for energy coupling to the transport system. The chain is Methionine import ATP-binding protein MetN 1 from Pseudomonas putida (strain ATCC 47054 / DSM 6125 / CFBP 8728 / NCIMB 11950 / KT2440).